Here is a 210-residue protein sequence, read N- to C-terminus: Urease accessory protein UreG (210 aa).

14–21 serves as a coordination point for GTP; the sequence is GPVGSGKT.

This sequence belongs to the SIMIBI class G3E GTPase family. UreG subfamily. As to quaternary structure, homodimer. UreD, UreF and UreG form a complex that acts as a GTP-hydrolysis-dependent molecular chaperone, activating the urease apoprotein by helping to assemble the nickel containing metallocenter of UreC. The UreE protein probably delivers the nickel.

It is found in the cytoplasm. Functionally, facilitates the functional incorporation of the urease nickel metallocenter. This process requires GTP hydrolysis, probably effectuated by UreG. The chain is Urease accessory protein UreG from Rhodopseudomonas palustris (strain BisA53).